The sequence spans 121 residues: Ribonuclease P protein component (121 aa).

Belongs to the RnpA family. In terms of assembly, consists of a catalytic RNA component (M1 or rnpB) and a protein subunit.

The enzyme catalyses Endonucleolytic cleavage of RNA, removing 5'-extranucleotides from tRNA precursor.. RNaseP catalyzes the removal of the 5'-leader sequence from pre-tRNA to produce the mature 5'-terminus. It can also cleave other RNA substrates such as 4.5S RNA. The protein component plays an auxiliary but essential role in vivo by binding to the 5'-leader sequence and broadening the substrate specificity of the ribozyme. The polypeptide is Ribonuclease P protein component (Erythrobacter litoralis (strain HTCC2594)).